The sequence spans 358 residues: Uroporphyrinogen decarboxylase (358 aa).

Substrate is bound by residues 36 to 40 (RQAGR), aspartate 85, tyrosine 160, serine 215, and histidine 338.

The protein belongs to the uroporphyrinogen decarboxylase family. Homodimer.

The protein localises to the cytoplasm. It catalyses the reaction uroporphyrinogen III + 4 H(+) = coproporphyrinogen III + 4 CO2. It participates in porphyrin-containing compound metabolism; protoporphyrin-IX biosynthesis; coproporphyrinogen-III from 5-aminolevulinate: step 4/4. In terms of biological role, catalyzes the decarboxylation of four acetate groups of uroporphyrinogen-III to yield coproporphyrinogen-III. The protein is Uroporphyrinogen decarboxylase of Corynebacterium glutamicum (strain R).